The sequence spans 377 residues: Copper-containing nitrite reductase (377 aa).

The tat-type signal signal peptide spans 1 to 35 (MTNTLQMTRRTMLTGAAVAGALTPILTSGGGNASP). Plastocyanin-like domains are found at residues 99–194 (MTFD…IMVL) and 259–360 (GAVG…FKVT). Residues His-132, His-137, His-172, Cys-173, His-182, Met-187, and His-343 each coordinate Cu cation.

This sequence belongs to the multicopper oxidase family. As to quaternary structure, homotrimer. It depends on Cu(2+) as a cofactor. The cofactor is Cu(+). Requires FAD as cofactor. In terms of processing, predicted to be exported by the Tat system. The position of the signal peptide cleavage has not been experimentally proven.

Its subcellular location is the periplasm. The catalysed reaction is nitric oxide + Fe(III)-[cytochrome c] + H2O = Fe(II)-[cytochrome c] + nitrite + 2 H(+). It functions in the pathway nitrogen metabolism; nitrate reduction (denitrification); dinitrogen from nitrate: step 2/4. The polypeptide is Copper-containing nitrite reductase (nirK) (Rhizobium sullae (Rhizobium hedysari)).